Reading from the N-terminus, the 131-residue chain is D-ribose pyranase (131 aa).

H20 acts as the Proton donor in catalysis. Substrate contacts are provided by residues D28, H98, and 120–122 (FSN).

It belongs to the RbsD / FucU family. RbsD subfamily. As to quaternary structure, homodecamer.

Its subcellular location is the cytoplasm. It catalyses the reaction beta-D-ribopyranose = beta-D-ribofuranose. It participates in carbohydrate metabolism; D-ribose degradation; D-ribose 5-phosphate from beta-D-ribopyranose: step 1/2. In terms of biological role, catalyzes the interconversion of beta-pyran and beta-furan forms of D-ribose. This chain is D-ribose pyranase, found in Lactobacillus acidophilus (strain ATCC 700396 / NCK56 / N2 / NCFM).